Reading from the N-terminus, the 65-residue chain is Large ribosomal subunit protein bL35 (65 aa).

The protein belongs to the bacterial ribosomal protein bL35 family.

The sequence is that of Large ribosomal subunit protein bL35 from Burkholderia ambifaria (strain MC40-6).